Reading from the N-terminus, the 317-residue chain is Olfactory receptor 5K17 (317 aa).

Residues methionine 1–phenylalanine 28 lie on the Extracellular side of the membrane. Asparagine 5 carries N-linked (GlcNAc...) asparagine glycosylation. Residues leucine 29 to isoleucine 49 traverse the membrane as a helical segment. The Cytoplasmic segment spans residues tyrosine 50–histidine 56. Residues threonine 57–isoleucine 77 traverse the membrane as a helical segment. Residues threonine 78–serine 93 are Extracellular-facing. A helical membrane pass occupies residues leucine 94–leucine 114. A disulfide bond links cysteine 97 and cysteine 189. Over leucine 115–methionine 144 the chain is Cytoplasmic. The helical transmembrane segment at serine 145 to arginine 165 threads the bilayer. The Extracellular segment spans residues leucine 166–methionine 198. A helical transmembrane segment spans residues leucine 199–serine 219. Residues cysteine 220–serine 239 lie on the Cytoplasmic side of the membrane. The helical transmembrane segment at threonine 240–isoleucine 259 threads the bilayer. Residues glycine 260 to aspartate 268 lie on the Extracellular side of the membrane. Residues isoleucine 269–leucine 289 traverse the membrane as a helical segment. The Cytoplasmic portion of the chain corresponds to arginine 290–histidine 317.

Belongs to the G-protein coupled receptor 1 family.

The protein resides in the cell membrane. In terms of biological role, potential odorant receptor. This Mus musculus (Mouse) protein is Olfactory receptor 5K17.